Here is a 752-residue protein sequence, read N- to C-terminus: Photosystem I P700 chlorophyll a apoprotein A1 (752 aa).

8 helical membrane passes run 73 to 96 (IFSA…FHGA), 159 to 182 (LYVT…FHYH), 198 to 222 (MNHH…HVSL), 294 to 312 (RAHH…GHMY), 349 to 372 (WHAQ…HHMY), 388 to 414 (LCLF…IFMV), 436 to 458 (AIIS…LYIH), and 533 to 551 (FLVH…LILL). 2 residues coordinate [4Fe-4S] cluster: Cys575 and Cys584. 2 helical membrane-spanning segments follow: residues 591 to 612 (HVFL…HFSW) and 666 to 688 (LSAY…MFLF). Position 677 (His677) interacts with chlorophyll a'. Positions 685 and 693 each coordinate chlorophyll a. Residue Trp694 participates in phylloquinone binding. Residues 726 to 746 (AVGVAHYLLGGIATTWSFFHA) traverse the membrane as a helical segment.

This sequence belongs to the PsaA/PsaB family. As to quaternary structure, the PsaA/B heterodimer binds the P700 chlorophyll special pair and subsequent electron acceptors. PSI consists of a core antenna complex that captures photons, and an electron transfer chain that converts photonic excitation into a charge separation. The eukaryotic PSI reaction center is composed of at least 11 subunits. P700 is a chlorophyll a/chlorophyll a' dimer, A0 is one or more chlorophyll a, A1 is one or both phylloquinones and FX is a shared 4Fe-4S iron-sulfur center. is required as a cofactor.

It is found in the plastid. It localises to the cyanelle thylakoid membrane. It catalyses the reaction reduced [plastocyanin] + hnu + oxidized [2Fe-2S]-[ferredoxin] = oxidized [plastocyanin] + reduced [2Fe-2S]-[ferredoxin]. Functionally, psaA and PsaB bind P700, the primary electron donor of photosystem I (PSI), as well as the electron acceptors A0, A1 and FX. PSI is a cytochrome c6-ferredoxin oxidoreductase, converting photonic excitation into a charge separation, which transfers an electron from the donor P700 chlorophyll pair to the spectroscopically characterized acceptors A0, A1, FX, FA and FB in turn. Oxidized P700 is reduced on the lumenal side of the thylakoid membrane by cytochrome c6. The polypeptide is Photosystem I P700 chlorophyll a apoprotein A1 (Cyanophora paradoxa).